The following is a 280-amino-acid chain: Transmembrane protein 45B (280 aa).

7 consecutive transmembrane segments (helical) span residues 7–27 (HALP…KYPL), 49–69 (LIEG…EQFV), 96–116 (MYLF…PLNL), 120–140 (LDRL…YYHV), 150–170 (IHSL…IEVF), 184–204 (LTIL…PLGG), and 216–236 (VMFI…IMAI).

The protein belongs to the TMEM45 family.

It is found in the membrane. This chain is Transmembrane protein 45B (tmem45b), found in Xenopus tropicalis (Western clawed frog).